The following is a 250-amino-acid chain: Triosephosphate isomerase (250 aa).

9–11 (NWK) provides a ligand contact to substrate. Catalysis depends on H94, which acts as the Electrophile. E166 (proton acceptor) is an active-site residue. Residues G172, S212, and 233-234 (GG) each bind substrate.

The protein belongs to the triosephosphate isomerase family. As to quaternary structure, homodimer.

Its subcellular location is the cytoplasm. The catalysed reaction is D-glyceraldehyde 3-phosphate = dihydroxyacetone phosphate. The protein operates within carbohydrate biosynthesis; gluconeogenesis. It participates in carbohydrate degradation; glycolysis; D-glyceraldehyde 3-phosphate from glycerone phosphate: step 1/1. Functionally, involved in the gluconeogenesis. Catalyzes stereospecifically the conversion of dihydroxyacetone phosphate (DHAP) to D-glyceraldehyde-3-phosphate (G3P). This chain is Triosephosphate isomerase, found in Thermus thermophilus (strain ATCC 27634 / DSM 579 / HB8).